The following is a 118-amino-acid chain: Ribonuclease P protein component 4 (118 aa).

Cys-59, Cys-62, Cys-85, and Cys-88 together coordinate Zn(2+).

This sequence belongs to the eukaryotic/archaeal RNase P protein component 4 family. Consists of a catalytic RNA component and at least 4-5 protein subunits. Zn(2+) serves as cofactor.

It localises to the cytoplasm. It carries out the reaction Endonucleolytic cleavage of RNA, removing 5'-extranucleotides from tRNA precursor.. In terms of biological role, part of ribonuclease P, a protein complex that generates mature tRNA molecules by cleaving their 5'-ends. The sequence is that of Ribonuclease P protein component 4 from Sulfolobus acidocaldarius (strain ATCC 33909 / DSM 639 / JCM 8929 / NBRC 15157 / NCIMB 11770).